Reading from the N-terminus, the 238-residue chain is IkB-like protein (238 aa).

4 ANK repeats span residues glycine 48 to histidine 80, glycine 87 to cysteine 118, glycine 124 to lysine 153, and glycine 158 to methionine 187. The Nuclear localization signal motif lies at histidine 80–aspartate 86. Positions lysine 202 to lysine 213 match the Nuclear localization signal motif. The short motif at proline 205–cysteine 212 is the PxIxITxC motif; Interaction with host PPP3CA element. Residues phenylalanine 227–valine 230 carry the FLCV motif motif.

The protein belongs to the asfivirus A238L family. As to quaternary structure, interacts with host PPIA. Interacts with host PPP3CA/Calcineurin. Interacts with host RELA/p65; interaction of the 32 kDa form with host RELA results in the formation of a stable complex with NF-kappa-B. Interacts with host PPP3R1. Interacts with host EP300; this interaction inhibits the association of host EP300 with host RELA, JUN and NFATC2. The protein exists in a 28 kDa and a 32 kDa form, probably due to post-translational modifications which are neither phosphorylation, nor sumoylation.

Its subcellular location is the host nucleus. The protein resides in the host cytoplasm. In terms of biological role, ikB-like protein that inhibits the binding of NF-kappa-B to DNA, thereby downregulating pro-inflammatory cytokine production. Forms a heterodimer with the NF-kappa-B subunit RELA/p65 and prevents the activation of the NF-kappa-B transcription factor. Inhibits calcineurin function, which is required for the induction of nuclear factor of activated T cells (NFAT)-dependent immune response genes. Prevents the binding of substrates to calcineurin without affecting the phosphatase activity. Does not contain the serine residues that are phosphorylated by host IkB kinase and thus is not degraded following stimulation of the NFkB pathway. This chain is IkB-like protein (A238L), found in Ornithodoros (relapsing fever ticks).